A 407-amino-acid polypeptide reads, in one-letter code: Methylthioribose kinase (407 aa).

Residues N40, K57, and 111-113 (EDL) contribute to the ATP site. D229 contributes to the substrate binding site. 246–248 (DAE) contributes to the ATP binding site. Position 344 (R344) interacts with substrate.

It belongs to the methylthioribose kinase family. Homodimer.

It catalyses the reaction 5-(methylsulfanyl)-D-ribose + ATP = 5-(methylsulfanyl)-alpha-D-ribose 1-phosphate + ADP + H(+). It functions in the pathway amino-acid biosynthesis; L-methionine biosynthesis via salvage pathway; S-methyl-5-thio-alpha-D-ribose 1-phosphate from S-methyl-5'-thioadenosine (hydrolase route): step 2/2. Functionally, catalyzes the phosphorylation of methylthioribose into methylthioribose-1-phosphate. This Yersinia pestis bv. Antiqua (strain Angola) protein is Methylthioribose kinase.